A 341-amino-acid chain; its full sequence is Ribosomal RNA small subunit methyltransferase C (341 aa).

This sequence belongs to the methyltransferase superfamily. RsmC family. As to quaternary structure, monomer.

The protein resides in the cytoplasm. The catalysed reaction is guanosine(1207) in 16S rRNA + S-adenosyl-L-methionine = N(2)-methylguanosine(1207) in 16S rRNA + S-adenosyl-L-homocysteine + H(+). Specifically methylates the guanine in position 1207 of 16S rRNA in the 30S particle. This Shewanella amazonensis (strain ATCC BAA-1098 / SB2B) protein is Ribosomal RNA small subunit methyltransferase C.